The sequence spans 155 residues: Small ribosomal subunit protein uS7c (155 aa).

The protein belongs to the universal ribosomal protein uS7 family. As to quaternary structure, part of the 30S ribosomal subunit.

Its subcellular location is the plastid. It is found in the chloroplast. One of the primary rRNA binding proteins, it binds directly to 16S rRNA where it nucleates assembly of the head domain of the 30S subunit. The protein is Small ribosomal subunit protein uS7c (rps7) of Coelogyne cristata (Orchid).